A 189-amino-acid chain; its full sequence is UPF0312 protein VC0395_0473/VC395_A0785 (189 aa).

The first 22 residues, 1 to 22, serve as a signal peptide directing secretion; sequence MKKTLMAVGLAAVISIPFAANA.

This sequence belongs to the UPF0312 family. Type 1 subfamily.

The protein resides in the periplasm. The chain is UPF0312 protein VC0395_0473/VC395_A0785 from Vibrio cholerae serotype O1 (strain ATCC 39541 / Classical Ogawa 395 / O395).